The primary structure comprises 427 residues: 3-phosphoshikimate 1-carboxyvinyltransferase (427 aa).

3-phosphoshikimate is bound by residues lysine 20, serine 21, and arginine 25. Phosphoenolpyruvate is bound at residue lysine 20. 2 residues coordinate phosphoenolpyruvate: glycine 92 and arginine 120. Positions 166, 168, 312, and 339 each coordinate 3-phosphoshikimate. Glutamine 168 serves as a coordination point for phosphoenolpyruvate. The active-site Proton acceptor is the aspartate 312. Residues arginine 343 and arginine 385 each contribute to the phosphoenolpyruvate site.

This sequence belongs to the EPSP synthase family. As to quaternary structure, monomer.

The protein localises to the cytoplasm. The catalysed reaction is 3-phosphoshikimate + phosphoenolpyruvate = 5-O-(1-carboxyvinyl)-3-phosphoshikimate + phosphate. It participates in metabolic intermediate biosynthesis; chorismate biosynthesis; chorismate from D-erythrose 4-phosphate and phosphoenolpyruvate: step 6/7. In terms of biological role, catalyzes the transfer of the enolpyruvyl moiety of phosphoenolpyruvate (PEP) to the 5-hydroxyl of shikimate-3-phosphate (S3P) to produce enolpyruvyl shikimate-3-phosphate and inorganic phosphate. The sequence is that of 3-phosphoshikimate 1-carboxyvinyltransferase from Streptococcus mutans serotype c (strain ATCC 700610 / UA159).